We begin with the raw amino-acid sequence, 184 residues long: NADH-quinone oxidoreductase subunit B (184 aa).

[4Fe-4S] cluster is bound by residues Cys-63, Cys-64, Cys-128, and Cys-158.

It belongs to the complex I 20 kDa subunit family. NDH-1 is composed of 14 different subunits. Subunits NuoB, C, D, E, F, and G constitute the peripheral sector of the complex. [4Fe-4S] cluster is required as a cofactor.

Its subcellular location is the cell inner membrane. It catalyses the reaction a quinone + NADH + 5 H(+)(in) = a quinol + NAD(+) + 4 H(+)(out). In terms of biological role, NDH-1 shuttles electrons from NADH, via FMN and iron-sulfur (Fe-S) centers, to quinones in the respiratory chain. The immediate electron acceptor for the enzyme in this species is believed to be ubiquinone. Couples the redox reaction to proton translocation (for every two electrons transferred, four hydrogen ions are translocated across the cytoplasmic membrane), and thus conserves the redox energy in a proton gradient. This is NADH-quinone oxidoreductase subunit B from Xanthomonas oryzae pv. oryzae (strain MAFF 311018).